The following is a 352-amino-acid chain: C-X-C chemokine receptor type 4 (352 aa).

Positions M1–Y21 are important for chemokine binding and signaling. Topologically, residues M1 to R38 are extracellular. Sulfotyrosine is present on Y7. An N-linked (GlcNAc...) asparagine glycan is attached at N11. The residue at position 12 (Y12) is a Sulfotyrosine. S18 carries O-linked (Xyl...) (chondroitin sulfate) serine glycosylation. A Sulfotyrosine modification is found at Y21. Intrachain disulfides connect C28/C274 and C109/C186. Residues I39 to M63 form a helical membrane-spanning segment. The Cytoplasmic portion of the chain corresponds to G64 to R77. A helical membrane pass occupies residues L78–V99. Residues W94–D97 form a chemokine binding region. The Extracellular segment spans residues A100–K110. A helical membrane pass occupies residues A111 to I130. A chemokine binding region spans residues H113–T117. The Cytoplasmic segment spans residues S131–K154. The Important for signaling motif lies at D133–Y135. Residues Y135–P147 form an involved in dimerization; when bound to chemokine region. Residues V155 to F174 traverse the membrane as a helical segment. The Extracellular segment spans residues A175–W195. Residues C186 to Y190 are chemokine binding, important for signaling. The interval P191–L210 is involved in dimerization. Residues V196–L216 form a helical membrane-spanning segment. Residues S217–T241 lie on the Cytoplasmic side of the membrane. Residues V242–I261 traverse the membrane as a helical segment. The Extracellular segment spans residues D262–K282. The segment at L266 to E268 is involved in dimerization. A helical membrane pass occupies residues W283–Y302. The Cytoplasmic segment spans residues A303–S352. Phosphoserine occurs at positions 319 and 321. Phosphoserine; by PKC and GRK6 occurs at positions 324 and 325. The segment at L329–S352 is disordered. Position 330 is a phosphoserine; by GRK6 (S330). K331 participates in a covalent cross-link: Glycyl lysine isopeptide (Lys-Gly) (interchain with G-Cter in ubiquitin). Positions H337–S352 are enriched in low complexity. Position 339 is a phosphoserine; by GRK6 (S339). S348 and S351 each carry phosphoserine.

The protein belongs to the G-protein coupled receptor 1 family. As to quaternary structure, monomer. Can form homodimers. Interacts with CD164. Interacts with ARRB2; the interaction is dependent on the C-terminal phosphorylation of CXCR4 and allows activation of MAPK1 and MAPK3. Interacts with ARR3; the interaction is dependent on the C-terminal phosphorylation of CXCR4 and modulates calcium mobilization. Interacts with RNF113A; the interaction, enhanced by CXCL12, promotes CXCR4 ubiquitination and subsequent degradation. Interacts (via the cytoplasmic C-terminal) with ITCH (via the WW domains I and II); the interaction, enhanced by CXCL12, promotes CXCR4 ubiquitination and leads to its degradation. Interacts with extracellular ubiquitin. Interacts with DBN1; this interaction is enhanced by antigenic stimulation. Following LPS binding, may form a complex with GDF5, HSP90AA1 and HSPA8. Post-translationally, phosphorylated on agonist stimulation. Rapidly phosphorylated on serine and threonine residues in the C-terminal. Phosphorylation at Ser-324 and Ser-325 leads to recruitment of ITCH, ubiquitination and protein degradation. In terms of processing, ubiquitinated after ligand binding, leading to its degradation. Ubiquitinated by ITCH at the cell membrane on agonist stimulation. The ubiquitin-dependent mechanism, endosomal sorting complex required for transport (ESCRT), then targets CXCR4 for lysosomal degradation. This process is dependent also on prior Ser-/Thr-phosphorylation in the C-terminal of CXCR4. Also binding of ARRB1 to STAM negatively regulates CXCR4 sorting to lysosomes though modulating ubiquitination of SFR5S. Sulfation is required for efficient binding of CXCL12/SDF-1alpha and promotes its dimerization. Post-translationally, O- and N-glycosylated. N-glycosylation can mask coreceptor function. The O-glycosylation chondroitin sulfate attachment does not affect interaction with CXCL12/SDF-1alpha nor its coreceptor activity.

The protein resides in the cell membrane. Its subcellular location is the cell junction. It localises to the early endosome. It is found in the late endosome. The protein localises to the lysosome. Its function is as follows. Receptor for the C-X-C chemokine CXCL12/SDF-1 that transduces a signal by increasing intracellular calcium ion levels and enhancing MAPK1/MAPK3 activation. Involved in the AKT signaling cascade. Plays a role in regulation of cell migration, e.g. during wound healing. Acts as a receptor for extracellular ubiquitin; leading to enhanced intracellular calcium ions and reduced cellular cAMP levels. Binds bacterial lipopolysaccharide (LPS) et mediates LPS-induced inflammatory response, including TNF secretion by monocytes. Involved in hematopoiesis and in cardiac ventricular septum formation. Also plays an essential role in vascularization of the gastrointestinal tract, probably by regulating vascular branching and/or remodeling processes in endothelial cells. Involved in cerebellar development. In the CNS, could mediate hippocampal-neuron survival. The polypeptide is C-X-C chemokine receptor type 4 (CXCR4) (Chlorocebus aethiops (Green monkey)).